The sequence spans 338 residues: 1-aminocyclopropane-1-carboxylate deaminase (338 aa).

Lys-51 carries the N6-(pyridoxal phosphate)lysine modification. The active-site Nucleophile is the Ser-78.

It belongs to the ACC deaminase/D-cysteine desulfhydrase family. In terms of assembly, homotrimer. Pyridoxal 5'-phosphate serves as cofactor.

It carries out the reaction 1-aminocyclopropane-1-carboxylate + H2O = 2-oxobutanoate + NH4(+). Catalyzes a cyclopropane ring-opening reaction, the irreversible conversion of 1-aminocyclopropane-1-carboxylate (ACC) to ammonia and alpha-ketobutyrate. Allows growth on ACC as a nitrogen source. In Pseudomonas fluorescens, this protein is 1-aminocyclopropane-1-carboxylate deaminase.